Reading from the N-terminus, the 880-residue chain is Valine--tRNA ligase (880 aa).

A 'HIGH' region motif is present at residues 49–59 (PNVTGKLHLGH). Residues 525–529 (KMSKS) carry the 'KMSKS' region motif. Lysine 528 is an ATP binding site. Residues 809–880 (LEGLINIEEE…VKARLAELKR (72 aa)) are a coiled coil.

It belongs to the class-I aminoacyl-tRNA synthetase family. ValS type 1 subfamily. Monomer.

The protein localises to the cytoplasm. The enzyme catalyses tRNA(Val) + L-valine + ATP = L-valyl-tRNA(Val) + AMP + diphosphate. Catalyzes the attachment of valine to tRNA(Val). As ValRS can inadvertently accommodate and process structurally similar amino acids such as threonine, to avoid such errors, it has a 'posttransfer' editing activity that hydrolyzes mischarged Thr-tRNA(Val) in a tRNA-dependent manner. This chain is Valine--tRNA ligase, found in Geobacillus kaustophilus (strain HTA426).